We begin with the raw amino-acid sequence, 549 residues long: Chaperonin GroEL 2 (549 aa).

Residues 29 to 32 (TLGP), lysine 50, 86 to 90 (DGTTT), glycine 414, 477 to 479 (NAA), and aspartate 493 each bind ATP.

It belongs to the chaperonin (HSP60) family. Forms a cylinder of 14 subunits composed of two heptameric rings stacked back-to-back. Interacts with the co-chaperonin GroES.

Its subcellular location is the cytoplasm. The catalysed reaction is ATP + H2O + a folded polypeptide = ADP + phosphate + an unfolded polypeptide.. Together with its co-chaperonin GroES, plays an essential role in assisting protein folding. The GroEL-GroES system forms a nano-cage that allows encapsulation of the non-native substrate proteins and provides a physical environment optimized to promote and accelerate protein folding. The chain is Chaperonin GroEL 2 from Myxococcus xanthus (strain DK1622).